The sequence spans 211 residues: Transcriptional regulatory protein RcsA (211 aa).

The HTH luxR-type domain maps to Leu-135–Asp-200. Residues Thr-159–Gly-178 constitute a DNA-binding region (H-T-H motif).

Belongs to the RcsA family.

Component of the Rcs signaling system, which controls transcription of numerous genes. Binds to DNA to regulate expression of genes. The sequence is that of Transcriptional regulatory protein RcsA from Pantoea stewartii subsp. stewartii (Erwinia stewartii).